Here is a 1404-residue protein sequence, read N- to C-terminus: DNA-directed RNA polymerase subunit beta' (1404 aa).

Residues cysteine 70, cysteine 72, cysteine 85, and cysteine 88 each coordinate Zn(2+). Residues aspartate 460, aspartate 462, and aspartate 464 each coordinate Mg(2+). Zn(2+) contacts are provided by cysteine 825, cysteine 899, cysteine 906, and cysteine 909.

Belongs to the RNA polymerase beta' chain family. As to quaternary structure, the RNAP catalytic core consists of 2 alpha, 1 beta, 1 beta' and 1 omega subunit. When a sigma factor is associated with the core the holoenzyme is formed, which can initiate transcription. Mg(2+) is required as a cofactor. The cofactor is Zn(2+).

It catalyses the reaction RNA(n) + a ribonucleoside 5'-triphosphate = RNA(n+1) + diphosphate. In terms of biological role, DNA-dependent RNA polymerase catalyzes the transcription of DNA into RNA using the four ribonucleoside triphosphates as substrates. The protein is DNA-directed RNA polymerase subunit beta' of Nitrosomonas europaea (strain ATCC 19718 / CIP 103999 / KCTC 2705 / NBRC 14298).